The sequence spans 514 residues: 2,3-bisphosphoglycerate-independent phosphoglycerate mutase (514 aa).

Mn(2+) is bound by residues Asp13 and Ser63. Ser63 acts as the Phosphoserine intermediate in catalysis. Substrate contacts are provided by residues His124, 154 to 155, Arg186, Arg192, 258 to 261, and Lys332; these read RD and RADR. Mn(2+) contacts are provided by Asp399, His403, Asp440, His441, and His459.

Belongs to the BPG-independent phosphoglycerate mutase family. As to quaternary structure, monomer. Mn(2+) is required as a cofactor.

It carries out the reaction (2R)-2-phosphoglycerate = (2R)-3-phosphoglycerate. It functions in the pathway carbohydrate degradation; glycolysis; pyruvate from D-glyceraldehyde 3-phosphate: step 3/5. Functionally, catalyzes the interconversion of 2-phosphoglycerate and 3-phosphoglycerate. The protein is 2,3-bisphosphoglycerate-independent phosphoglycerate mutase of Legionella pneumophila (strain Paris).